A 291-amino-acid polypeptide reads, in one-letter code: tRNA U34 carboxymethyltransferase (291 aa).

Carboxy-S-adenosyl-L-methionine-binding positions include K61, W75, K80, G100, 122–124 (DPS), Y169, and R284.

This sequence belongs to the class I-like SAM-binding methyltransferase superfamily. CmoB family. As to quaternary structure, homotetramer.

The enzyme catalyses carboxy-S-adenosyl-L-methionine + 5-hydroxyuridine(34) in tRNA = 5-carboxymethoxyuridine(34) in tRNA + S-adenosyl-L-homocysteine + H(+). Catalyzes carboxymethyl transfer from carboxy-S-adenosyl-L-methionine (Cx-SAM) to 5-hydroxyuridine (ho5U) to form 5-carboxymethoxyuridine (cmo5U) at position 34 in tRNAs. This Campylobacter lari (strain RM2100 / D67 / ATCC BAA-1060) protein is tRNA U34 carboxymethyltransferase.